Here is a 966-residue protein sequence, read N- to C-terminus: Mitogen-activated protein kinase kinase kinase 13 (966 aa).

3 disordered regions span residues 1 to 22 (MANF…SESK), 30 to 49 (ELTA…QQEK), and 90 to 114 (HDES…SGTE). Residues 95–113 (TAVSQGNSNTVDGESTSGT) are compositionally biased toward polar residues. In terms of domain architecture, Protein kinase spans 168–409 (ISELQWLGSG…FRQTLMHLDI (242 aa)). ATP-binding positions include 174–182 (LGSGAQGAV) and Lys195. Asp279 acts as the Proton acceptor in catalysis. Leucine-zipper regions lie at residues 433–454 (VKKH…DEEL) and 486–507 (LSAI…EQAV). Disordered stretches follow at residues 534–599 (KRKG…RGSH), 611–655 (AQEN…HHPR), 744–834 (DIPS…RRQR), and 846–908 (STFS…GLSD). Positions 567–581 (SPLSGSPKMSTSSSK) are enriched in low complexity. A compositionally biased stretch (basic residues) spans 582 to 594 (SRYRSKPRHRRGN). 2 stretches are compositionally biased toward polar residues: residues 611–629 (AQEN…SQYP) and 785–795 (RSESSLGTSHL). Positions 814-827 (DSSEEEEGEVDSEV) are enriched in acidic residues. The acidic stretch occupies residues 815–828 (SSEEEEGEVDSEVE). A compositionally biased stretch (polar residues) spans 846 to 855 (STFSSENFSV). Residues 873-887 (LADKLEDRLAEKLDD) are compositionally biased toward basic and acidic residues.

It belongs to the protein kinase superfamily. STE Ser/Thr protein kinase family. MAP kinase kinase kinase subfamily. In terms of assembly, homodimer; forms dimers through the leucine-zipper motif. Interacts with the C-terminus of MAPK8IP1 through the kinase catalytic domain. Binds PRDX3. Associates with the IKK complex through the kinase domain. It depends on Mg(2+) as a cofactor. Post-translationally, autophosphorylated on serine and threonine residues. Expressed in the adult brain, liver, placenta and pancreas, with expression strongest in the pancreas.

It is found in the cytoplasm. The protein resides in the membrane. The catalysed reaction is L-seryl-[protein] + ATP = O-phospho-L-seryl-[protein] + ADP + H(+). It carries out the reaction L-threonyl-[protein] + ATP = O-phospho-L-threonyl-[protein] + ADP + H(+). Its activity is regulated as follows. Activated by autophosphorylation and homodimerization. Its function is as follows. Activates the JUN N-terminal pathway through activation of the MAP kinase kinase MAP2K7. Acts synergistically with PRDX3 to regulate the activation of NF-kappa-B in the cytosol. This activation is kinase-dependent and involves activating the IKK complex, the IKBKB-containing complex that phosphorylates inhibitors of NF-kappa-B. The chain is Mitogen-activated protein kinase kinase kinase 13 from Homo sapiens (Human).